Here is an 856-residue protein sequence, read N- to C-terminus: Rod cGMP-specific 3',5'-cyclic phosphodiesterase subunit beta (856 aa).

Position 2 is an N-acetylserine (serine 2). GAF domains are found at residues 71 to 220 (NMER…TLNL) and 252 to 429 (DIER…GWSV). Positions 481 to 814 (EEDELGKILK…KEWKALADEY (334 aa)) constitute a PDEase domain. Histidine 557 serves as the catalytic Proton donor. Residues histidine 561, histidine 597, aspartate 598, and aspartate 718 each coordinate a divalent metal cation. Cysteine 853 is lipidated: S-geranylgeranyl cysteine. The propeptide at 854 to 856 (CIL) is removed in mature form.

It belongs to the cyclic nucleotide phosphodiesterase family. In terms of assembly, oligomer composed of two catalytic chains (alpha and beta), an inhibitory chain (gamma) and the delta chain. The cofactor is a divalent metal cation.

It is found in the membrane. Its subcellular location is the cell projection. It localises to the cilium. The protein localises to the photoreceptor outer segment. The catalysed reaction is 3',5'-cyclic GMP + H2O = GMP + H(+). Its function is as follows. Rod-specific cGMP phosphodiesterase that catalyzes the hydrolysis of 3',5'-cyclic GMP. Necessary for the formation of a functional phosphodiesterase holoenzyme. Involved in retinal circadian rhythm photoentrainment via modulation of UVA and orange light-induced phase-shift of the retina clock. May participate in processes of transmission and amplification of the visual signal. The sequence is that of Rod cGMP-specific 3',5'-cyclic phosphodiesterase subunit beta from Mus musculus (Mouse).